We begin with the raw amino-acid sequence, 174 residues long: Probable NAD(P)H dehydrogenase subunit CRR3, chloroplastic (174 aa).

Residues 1–54 (MAVLSTIYSITRASTPTMASLTNDSPSPLPSSSPSKLPSPTSPSKKPLKLRQVS) constitute a chloroplast transit peptide. Over residues 14–24 (STPTMASLTND) the composition is skewed to polar residues. Residues 14 to 71 (STPTMASLTNDSPSPLPSSSPSKLPSPTSPSKKPLKLRQVSKQMGSQNQQRRGNKPSI) are disordered. Over residues 30–45 (PSSSPSKLPSPTSPSK) the composition is skewed to low complexity. The segment covering 53 to 64 (VSKQMGSQNQQR) has biased composition (polar residues). Residues 140–160 (FTIQWILPIWIMSLLVACGVI) form a helical membrane-spanning segment.

Its subcellular location is the plastid. It localises to the chloroplast thylakoid membrane. In terms of biological role, probable subunit of the chloroplast NAD(P)H dehydrogenase (NDH) complex of the photosynthetic electron transport chain. Required for both formation and activity of NDH. May function in assembly or stabilization of the NDH complex. The polypeptide is Probable NAD(P)H dehydrogenase subunit CRR3, chloroplastic (Arabidopsis thaliana (Mouse-ear cress)).